A 556-amino-acid chain; its full sequence is Solute carrier family 22 member 20 (556 aa).

At M1–R15 the chain is on the cytoplasmic side. A helical membrane pass occupies residues F16–F36. The Extracellular portion of the chain corresponds to L37 to D137. N39, N54, N61, and N96 each carry an N-linked (GlcNAc...) asparagine glycan. Residues L138–A158 traverse the membrane as a helical segment. Topologically, residues D159–P166 are cytoplasmic. A helical membrane pass occupies residues L167–F187. The Extracellular portion of the chain corresponds to S188–R194. The helical transmembrane segment at F195–W215 threads the bilayer. At M216 to G225 the chain is on the cytoplasmic side. A helical transmembrane segment spans residues I226–I246. Over R247–R250 the chain is Extracellular. The chain crosses the membrane as a helical span at residues W251 to P271. The Cytoplasmic segment spans residues E272–R339. Residues V340 to M360 form a helical membrane-spanning segment. Over D361–G366 the chain is Extracellular. A helical transmembrane segment spans residues L367–A387. The Cytoplasmic segment spans residues T388–R397. Residues A398 to P418 traverse the membrane as a helical segment. The Extracellular segment spans residues E419–R425. Residues T426–F446 traverse the membrane as a helical segment. Topologically, residues T447–Q457 are cytoplasmic. Residues M458–T478 form a helical membrane-spanning segment. Residues T479–P485 lie on the Extracellular side of the membrane. Residues V486–F506 form a helical membrane-spanning segment. Over L507–I556 the chain is Cytoplasmic. The span at V526–E541 shows a compositional bias: basic and acidic residues. The interval V526–I556 is disordered.

The protein belongs to the major facilitator (TC 2.A.1) superfamily. Organic cation transporter (TC 2.A.1.19) family. Highly expressed in olfactory mucosa. Weakly expressed in testis. Not detected in heart, spleen, lung, kidney or brain.

The protein resides in the membrane. In terms of biological role, organic anion transporter that mediates the uptake of estrone sulfate. Inhibited by probenecid, propionate, 2-methylbutyrate, 3-methylbutyrate, benzoate, heptanoate and 2-ethylhaxanoate. May act as an odorant transporter. This chain is Solute carrier family 22 member 20 (Slc22a20), found in Mus musculus (Mouse).